Reading from the N-terminus, the 1420-residue chain is DNA-directed RNA polymerase subunit beta' (1420 aa).

Zn(2+)-binding residues include Cys-71, Cys-73, Cys-86, and Cys-89. Residues Asp-461, Asp-463, and Asp-465 each contribute to the Mg(2+) site. Residues Cys-815, Cys-889, Cys-896, and Cys-899 each coordinate Zn(2+).

It belongs to the RNA polymerase beta' chain family. As to quaternary structure, the RNAP catalytic core consists of 2 alpha, 1 beta, 1 beta' and 1 omega subunit. When a sigma factor is associated with the core the holoenzyme is formed, which can initiate transcription. Mg(2+) is required as a cofactor. Requires Zn(2+) as cofactor.

It carries out the reaction RNA(n) + a ribonucleoside 5'-triphosphate = RNA(n+1) + diphosphate. DNA-dependent RNA polymerase catalyzes the transcription of DNA into RNA using the four ribonucleoside triphosphates as substrates. The protein is DNA-directed RNA polymerase subunit beta' of Histophilus somni (strain 129Pt) (Haemophilus somnus).